A 316-amino-acid polypeptide reads, in one-letter code: ATP synthase gamma chain (316 aa).

Belongs to the ATPase gamma chain family. As to quaternary structure, F-type ATPases have 2 components, CF(1) - the catalytic core - and CF(0) - the membrane proton channel. CF(1) has five subunits: alpha(3), beta(3), gamma(1), delta(1), epsilon(1). CF(0) has three main subunits: a, b and c.

The protein resides in the cellular thylakoid membrane. Produces ATP from ADP in the presence of a proton gradient across the membrane. The gamma chain is believed to be important in regulating ATPase activity and the flow of protons through the CF(0) complex. This Synechococcus sp. (strain WH7803) protein is ATP synthase gamma chain.